Consider the following 329-residue polypeptide: Transcription factor RF2b (329 aa).

Disordered stretches follow at residues 1–24 and 62–97; these read MQEP…RSEV and SSGP…DGSG. Residues 132–195 enclose the bZIP domain; that stretch reads DPKRAKRILA…TGLSAENAEL (64 aa). The basic motif stretch occupies residues 134–155; it reads KRAKRILANRQSAARSKERKAR. The leucine-zipper stretch occupies residues 160–174; that stretch reads LERKVQTLQTEATTL. Positions 260–303 are disordered; that stretch reads RQNGGTQLPPQFQPPRPNVPNHMLSHPNGLQDIMQQDPLGRLQG.

Belongs to the bZIP family. As to quaternary structure, binds DNA as a homodimer or as a heterodimer with RF2a. The heterodimer binds stronger to DNA than the homodimer. In terms of tissue distribution, expressed at high levels in roots, low level in leaf sheath, but not in leaf blade. Predominantly expressed in vascular tissues.

The protein localises to the nucleus. Transcription factor probably involved in vascular development and shoot tissue organization. Binds to the DNA sequence 5'-CCGAGTGTGCCCCTGG-3' present in the promoter region Box II of the phloem-specific rice tungro bacilliform virus (RTBV) promoter. May regulate tissue-specific expression of the RTBV promoter and virus replication. The protein is Transcription factor RF2b (RF2b) of Oryza sativa subsp. japonica (Rice).